Reading from the N-terminus, the 212-residue chain is Riboflavin kinase (212 aa).

Residues M1 to S87 form an H-T-H motif-like region. Positions G88–V212 are riboflavin kinase. G97–A102 provides a ligand contact to CDP. Mg(2+)-binding residues include T124 and N126. Residues T180 and E188 each contribute to the FMN site. Residue V193–R196 participates in CDP binding.

It belongs to the archaeal riboflavin kinase family. Requires Mg(2+) as cofactor.

The catalysed reaction is riboflavin + CTP = CDP + FMN + H(+). Its pathway is cofactor biosynthesis; FMN biosynthesis; FMN from riboflavin (CTP route): step 1/1. Functionally, catalyzes the CTP-dependent phosphorylation of riboflavin (vitamin B2) to form flavin mononucleotide (FMN). The polypeptide is Riboflavin kinase (ribK) (Pyrococcus abyssi (strain GE5 / Orsay)).